The sequence spans 354 residues: DNA polymerase IV (354 aa).

The 182-residue stretch at 6–187 (IIHIDCDCFY…LPVTKLHGVG (182 aa)) folds into the UmuC domain. D10 and D105 together coordinate Mg(2+). Residue E106 is part of the active site.

The protein belongs to the DNA polymerase type-Y family. In terms of assembly, monomer. Mg(2+) is required as a cofactor.

Its subcellular location is the cytoplasm. It carries out the reaction DNA(n) + a 2'-deoxyribonucleoside 5'-triphosphate = DNA(n+1) + diphosphate. Its function is as follows. Poorly processive, error-prone DNA polymerase involved in untargeted mutagenesis. Copies undamaged DNA at stalled replication forks, which arise in vivo from mismatched or misaligned primer ends. These misaligned primers can be extended by PolIV. Exhibits no 3'-5' exonuclease (proofreading) activity. May be involved in translesional synthesis, in conjunction with the beta clamp from PolIII. The polypeptide is DNA polymerase IV (Pseudomonas syringae pv. syringae (strain B728a)).